The sequence spans 581 residues: Arginine--tRNA ligase (581 aa).

The short motif at 131–141 is the 'HIGH' region element; that stretch reads ANPTGPMHVGH.

It belongs to the class-I aminoacyl-tRNA synthetase family. In terms of assembly, monomer.

The protein localises to the cytoplasm. It carries out the reaction tRNA(Arg) + L-arginine + ATP = L-arginyl-tRNA(Arg) + AMP + diphosphate. This chain is Arginine--tRNA ligase, found in Paracoccus denitrificans (strain Pd 1222).